A 618-amino-acid polypeptide reads, in one-letter code: DNA mismatch repair protein MutL (618 aa).

Residues 348–359 (QTDTARSPTGNF) are compositionally biased toward polar residues. The tract at residues 348 to 400 (QTDTARSPTGNFESGEVFDYPKSQLQPSHSVSSGGASLGSRSAGGSGGAYRAT) is disordered. Positions 377–388 (SVSSGGASLGSR) are enriched in low complexity.

It belongs to the DNA mismatch repair MutL/HexB family.

Its function is as follows. This protein is involved in the repair of mismatches in DNA. It is required for dam-dependent methyl-directed DNA mismatch repair. May act as a 'molecular matchmaker', a protein that promotes the formation of a stable complex between two or more DNA-binding proteins in an ATP-dependent manner without itself being part of a final effector complex. In Pseudoalteromonas translucida (strain TAC 125), this protein is DNA mismatch repair protein MutL.